The following is a 2225-amino-acid chain: Nonribisomal peptide synthetase notE' (2225 aa).

Residues 24–59 are disordered; sequence TVRESLSSSPSPLPSLASPVSSGSEPPAFGETQPQS. A compositionally biased stretch (low complexity) spans 28 to 49; it reads SLSSSPSPLPSLASPVSSGSEP. An adenylation 1 region spans residues 83-482; the sequence is QERCKEAPQS…GRRDGQLKIR (400 aa). The Carrier 1 domain maps to 614–690; sequence SPTTATELML…EQAQRATPMT (77 aa). Position 651 is an O-(pantetheine 4'-phosphoryl)serine (Ser-651). A condensation 1 region spans residues 730 to 1142; sequence EDIYPCTPLQ…DLASPLDQDL (413 aa). An adenylation 2 region spans residues 1164–1563; the sequence is AQAMQQPSRQ…GRRDTQVKVR (400 aa). The 77-residue stretch at 1699-1775 folds into the Carrier 2 domain; it reads PVSHGAELRL…DLARCTGEEQ (77 aa). Position 1736 is an O-(pantetheine 4'-phosphoryl)serine (Ser-1736). Residues 1827 to 2138 are condensation 2; it reads FAFHGEVSID…FILQHQNIDM (312 aa).

The protein belongs to the NRP synthetase family.

The catalysed reaction is L-proline + L-tryptophan + 2 ATP = brevianamide F + 2 AMP + 2 diphosphate + 2 H(+). It participates in alkaloid biosynthesis. Its function is as follows. Nonribisomal peptide synthetase; part of the gene cluster that mediates the biosynthesis of notoamide, a fungal indole alkaloid that belongs to a family of natural products containing a characteristic bicyclo[2.2.2]diazaoctane core. The first step of notoamide biosynthesis involves coupling of L-proline and L-tryptophan by the bimodular NRPS notE', to produce cyclo-L-tryptophan-L-proline called brevianamide F. The reverse prenyltransferase notF' then acts as a deoxybrevianamide E synthase and converts brevianamide F to deoxybrevianamide E via reverse prenylation at C-2 of the indole ring leading to the bicyclo[2.2.2]diazaoctane core. Deoxybrevianamide E is further hydroxylated at C-6 of the indole ring, likely catalyzed by the cytochrome P450 monooxygenase notG', to yield 6-hydroxy-deoxybrevianamide E. 6-hydroxy-deoxybrevianamide E is a specific substrate of the prenyltransferase notC' for normal prenylation at C-7 to produce 6-hydroxy-7-prenyl-deoxybrevianamide, also called notoamide S. As the proposed pivotal branching point in notoamide biosynthesis, notoamide S can be diverted to notoamide E through an oxidative pyran ring closure putatively catalyzed by either notH' cytochrome P450 monooxygenase or the notD' FAD-linked oxidoreductase. This step would be followed by an indole 2,3-epoxidation-initiated pinacol-like rearrangement catalyzed by the notB' FAD-dependent monooxygenase leading to the formation of notoamide C and notoamide D. On the other hand notoamide S is converted to notoamide T by notH' (or notD'), a bifunctional oxidase that also functions as the intramolecular Diels-Alderase responsible for generation of (-)-notoamide T. To generate antipodal (+)-notoaminide T, notH (or notD) in Aspergillus strain MF297-2 is expected to catalyze a Diels-Alder reaction leading to the opposite stereochemistry. The remaining oxidoreductase notD' (or notH') likely catalyzes the oxidative pyran ring formation to yield (-)-stephacidin A. The FAD-dependent monooxygenase notI' is highly similar to notB' and is predicted to catalyze a similar conversion from (-)-stephacidin A to (+)-notoamide B via the 2,3-epoxidation of (-)-stephacidin A followed by a pinacol-type rearrangement. Finally, it remains unclear which enzyme could be responsible for the final hydroxylation steps leading to notoamide A and sclerotiamide. The polypeptide is Nonribisomal peptide synthetase notE' (Aspergillus versicolor).